The chain runs to 879 residues: MLGKYKAVLALLLLIILVPLTLLMTLGLWVPTLAGIWLPLGTRIALDESPRITRKGLIIPDLRYLVGDCQLAHITNASLSHPSRWLLNVGTVELDSACLAKLPQTEQSPAAPKTLAQWQAMLPNTWINIDKLIFSPWQEWQGKLSLALTSDIQQLRYQGEKVKFQGQLKGQQLTVSELDVVAFENQPPVKLVGEFAMPLVPDGLPVSGHATATLNLPQEPSLVDAELDWQENSGQLIVLARDNGDPLLDLPWQITRQQLTVSDGRWSWPYAGFPLSGRLGVKVDNWQAGLENALVSGRLSVLTQGQAGKGNAVLNFGPGKLSMDNSQLPLQLTGEAKQADLILYARLPAQLSGSLSDPTLTFEPGALLRSKGRVIDSLDIDEIRWPLAGVKVTQRGVDGRLQAILQAHENELGDFVLHMDGLANDFLPDAGRWQWRYWGKGSFTPMNATWDVAGKGEWHDSTITLTDLSTGFDQLQYGTMTVEKPRLILDKPIVWVRDAQHPSFSGALSLDAGQTLFTGGSVLPPSTLKFSVDGRDPTYFLFKGDLHAGEIGPVRVNGRWDGIRLRGNAWWPKQSLTVFQPLVPPDWKMNLRDGELYAQVAFSAAPEQGFRAGGHGVLKGGSAWMPDNQVNGVDFVLPFRFADGAWHLGTRGPVTLRIAEVINLVTAKNITADLQGRYPWTEEEPLLLTDVSVDVLGGNVLMKQLRMPQHDPALLRLNNLSSSELVSAVNPKQFAMSGAFSGALPLWLNNEKWIVKDGWLANSGPMTLRLDKDTADAVVKDNMTAGSAINWLRYMEISRSSTKINLDNLGLLTMQANITGTSRVDGKSGTVNLNYHHEENIFTLWRSLRFGDNLQAWLEQNARLPGNDCPQGKECEEKQ.

Residues 1–6 (MLGKYK) lie on the Cytoplasmic side of the membrane. A helical transmembrane segment spans residues 7–29 (AVLALLLLIILVPLTLLMTLGLW). The Periplasmic segment spans residues 30–879 (VPTLAGIWLP…PQGKECEEKQ (850 aa)).

As to quaternary structure, interacts with the outer membrane lipoprotein YnbE.

The protein localises to the cell inner membrane. In terms of biological role, involved in outer membrane lipid homeostasis. Interacts with the outer membrane lipoprotein YnbE to form a functional protein bridge connecting the inner and outer membranes of the cell. Likely transports phospholipids between the inner membrane and the outer membrane. It would provide a bridge-like structure that protects phospholipids as they travel across the periplasm. Functionally, tamB, YdbH and YhdP are redundant, but not equivalent, in performing an essential function for growth and maintaining lipid homeostasis in the outer membrane. Any of these three proteins is sufficient for growth. This is Probable phospholipid transport protein YdbH (ydbH) from Escherichia coli (strain K12).